A 556-amino-acid chain; its full sequence is Formate--tetrahydrofolate ligase (556 aa).

An ATP-binding site is contributed by 65–72 (TPAGEGKS).

Belongs to the formate--tetrahydrofolate ligase family.

The catalysed reaction is (6S)-5,6,7,8-tetrahydrofolate + formate + ATP = (6R)-10-formyltetrahydrofolate + ADP + phosphate. It participates in one-carbon metabolism; tetrahydrofolate interconversion. The sequence is that of Formate--tetrahydrofolate ligase from Streptococcus pneumoniae serotype 4 (strain ATCC BAA-334 / TIGR4).